Reading from the N-terminus, the 330-residue chain is Homeobox protein Hox-C13 (330 aa).

Gly residues predominate over residues 30 to 47; it reads GGGGGGGGGTGGAGGGCS. The interval 30–50 is disordered; that stretch reads GGGGGGGGGTGGAGGGCSGAS. A DNA-binding region (homeobox) is located at residues 260–319; sequence GRKKRVPYTKVQLKELEKEYAASKFITKEKRRRISATTNLSERQVTIWFQNRRVKEKKVV.

Belongs to the Abd-B homeobox family.

It is found in the nucleus. Functionally, transcription factor which plays a role in hair follicle differentiation. Regulates FOXQ1 expression and that of other hair-specific genes. This is Homeobox protein Hox-C13 (HOXC13) from Homo sapiens (Human).